Reading from the N-terminus, the 530-residue chain is MSGASSSEQNNNSYETKPPNLRMSEKKCSWASYMTNSPTLIVMIGLPARGKTYVSKKLTRYLNWIGVPTKVFNLGVYRREAVKSYKSYDFFRHDNEEAMKIRKQCALVALEDVKAYLTEENGQIAVFDATNTTRERRDMILNFAEQNSFKVFFVESVCDDPDVIAANILEVKVSSPDYPERNRENVMEDFLKRIECYKVTYRPLDPDNYDKDLSFIKVINVGQRFLVNRVQDYIQSKIVYYLMNIHVQPRTIYLCRHGESEFSLLGKIGGDSGLSVRGKQFAQALRKFLEEQEITDLKVWTSQLKRTIQTAESLGVPYEQWKILNEIDAGVCEEMTYAEIEKRYPEEFALRDQEKYLYRYPGGESYQDLVQRLEPVIMELERQGNVLVISHQAVMRCLLAYFLDKGADELPYLRCPLHTIFKLTPVAYGCKVETIKLNVEAVNTHRDKPTNNFPKNQTPVRMRRNSFTPLSSSNTIRRPRNYSVGSRPLKPLSPLRAQDMQEGPTSRRPKSHSGWCTVCFPPALASCPCH.

Over residues 1–15 (MSGASSSEQNNNSYE) the composition is skewed to polar residues. The tract at residues 1-21 (MSGASSSEQNNNSYETKPPNL) is disordered. Ser-2 is modified (N-acetylserine). A 6-phosphofructo-2-kinase region spans residues 2–248 (SGASSSEQNN…VYYLMNIHVQ (247 aa)). A Phosphoserine; by PKA modification is found at Ser-29. Residue 45–53 (GLPARGKTY) participates in ATP binding. Beta-D-fructose 6-phosphate contacts are provided by Arg-78 and Arg-102. Residue Asp-128 is part of the active site. Beta-D-fructose 6-phosphate is bound by residues Thr-130 and Arg-136. Cys-158 is an active-site residue. 167 to 172 (NILEVK) is an ATP binding site. The beta-D-fructose 6-phosphate site is built by Lys-172, Arg-193, and Tyr-197. The interval 249 to 530 (PRTIYLCRHG…PPALASCPCH (282 aa)) is fructose-2,6-bisphosphatase. Arg-256 contributes to the beta-D-fructose 2,6-bisphosphate binding site. The active-site Tele-phosphohistidine intermediate is the His-257. Gly-269 contacts beta-D-fructose 2,6-bisphosphate. Glu-326 functions as the Proton donor/acceptor in the catalytic mechanism. Beta-D-fructose 2,6-bisphosphate is bound by residues Tyr-337, Arg-351, Lys-355, Tyr-366, Gln-392, and Arg-396. 348 to 351 (FALR) serves as a coordination point for ATP. ATP contacts are provided by residues 392-396 (QAVMR) and Tyr-428. The interval 446 to 512 (RDKPTNNFPK…GPTSRRPKSH (67 aa)) is disordered. Positions 450 to 476 (TNNFPKNQTPVRMRRNSFTPLSSSNTI) are enriched in polar residues. Phosphoserine; by AMPK and PKA is present on Ser-466. Thr-468 carries the phosphothreonine modification. The residue at position 475 (Thr-475) is a Phosphothreonine; by PKC. Ser-483 and Ser-493 each carry phosphoserine.

The protein in the C-terminal section; belongs to the phosphoglycerate mutase family. As to quaternary structure, homodimer. Forms a heterodimer with PFKFB3. Post-translationally, phosphorylation by AMPK stimulates activity.

The enzyme catalyses beta-D-fructose 2,6-bisphosphate + H2O = beta-D-fructose 6-phosphate + phosphate. It carries out the reaction beta-D-fructose 6-phosphate + ATP = beta-D-fructose 2,6-bisphosphate + ADP + H(+). With respect to regulation, phosphorylation results in the activation of the kinase activity. Functionally, synthesis and degradation of fructose 2,6-bisphosphate. The sequence is that of 6-phosphofructo-2-kinase/fructose-2,6-bisphosphatase 2 (PFKFB2) from Pongo abelii (Sumatran orangutan).